The chain runs to 279 residues: Calcium-activated potassium channel subunit beta-3 (279 aa).

Topologically, residues 1–60 (MDFSPSSELGFHFVAFILLTRHRTAFPASGKKRETDYSDGDPLDVHKRLPSSAGEDRAVM) are cytoplasmic. A helical transmembrane segment spans residues 61 to 81 (LGFAMMGFSVLMFFLLGTTIL). Over 82 to 207 (KPFMLSIQRE…DVILIKKYDQ (126 aa)) the chain is Extracellular. An N-linked (GlcNAc...) asparagine glycan is attached at asparagine 131. The helical transmembrane segment at 208–228 (MAIFHCLFWPSLTLLGGALIV) threads the bilayer. At 229–279 (GMVRLTQHLSLLCEKYSTVVRDEVGGKVPYIEQHQFKLCIMRRSKGRAEKS) the chain is on the cytoplasmic side.

This sequence belongs to the KCNMB (TC 8.A.14.1) family. KCNMB3 subfamily. In terms of assembly, interacts with KCNMA1 tetramer. There are probably 4 molecules of KCMNB3 per KCNMA1 tetramer. In terms of processing, N-glycosylated. The extracellular domain contains disulfide bond essential for the gating mechanism. In terms of tissue distribution, isoform 1, isoform 3 and isoform 4 are widely expressed. Isoform 2 is expressed placenta, pancreas, kidney and heart. Isoform 1 and isoform 3 are highly expressed in pancreas and testis.

The protein localises to the membrane. In terms of biological role, regulatory subunit of the calcium activated potassium KCNMA1 (maxiK) channel. Modulates the calcium sensitivity and gating kinetics of KCNMA1, thereby contributing to KCNMA1 channel diversity. Alters the functional properties of the current expressed by the KCNMA1 channel. Isoform 2, isoform 3 and isoform 4 partially inactivate the current of KCNBMA. Isoform 4 induces a fast and incomplete inactivation of KCNMA1 channel that is detectable only at large depolarizations. In contrast, isoform 1 does not induce detectable inactivation of KCNMA1. Two or more subunits of KCNMB3 are required to block the KCNMA1 tetramer. This is Calcium-activated potassium channel subunit beta-3 (KCNMB3) from Homo sapiens (Human).